Reading from the N-terminus, the 415-residue chain is Serine/threonine transporter SstT (415 aa).

Transmembrane regions (helical) follow at residues G15–A35, L45–V65, I85–F105, A142–L162, V193–G213, L217–V237, G301–V321, and V331–I351.

It belongs to the dicarboxylate/amino acid:cation symporter (DAACS) (TC 2.A.23) family.

It is found in the cell inner membrane. It carries out the reaction L-serine(in) + Na(+)(in) = L-serine(out) + Na(+)(out). The catalysed reaction is L-threonine(in) + Na(+)(in) = L-threonine(out) + Na(+)(out). Functionally, involved in the import of serine and threonine into the cell, with the concomitant import of sodium (symport system). This is Serine/threonine transporter SstT from Photorhabdus laumondii subsp. laumondii (strain DSM 15139 / CIP 105565 / TT01) (Photorhabdus luminescens subsp. laumondii).